The sequence spans 390 residues: Isoaspartyl dipeptidase (390 aa).

Residues His68 and His70 each contribute to the Zn(2+) site. Residues 75–77 (GGE), Thr106, and Tyr137 contribute to the substrate site. Lys162 lines the Zn(2+) pocket. Lys162 bears the N6-carboxylysine mark. Arg169 contacts substrate. Zn(2+)-binding residues include His201 and His230. Arg233 contacts substrate. Asp285 lines the Zn(2+) pocket. Residue Asp285 is the Proton acceptor of the active site. Residue Ser289 coordinates substrate.

It belongs to the peptidase M38 family. The cofactor is Zn(2+). It depends on Co(2+) as a cofactor. Carboxylation allows a single lysine to coordinate two zinc ions.

The protein resides in the cytoplasm. With respect to regulation, P-hydroxymercuribenzoate causes a slight inhibition (8 to 17 %). Iodoacetamide, o-iodosobenzoate and ammonium persulfate do not inhibit the enzyme activity. Its function is as follows. Catalyzes the hydrolytic cleavage of a subset of L-isoaspartyl (L-beta-aspartyl) dipeptides. Used to degrade proteins damaged by L-isoaspartyl residues formation. The best substrate for the enzyme reported thus far is iso-Asp-Leu. This Escherichia coli (strain K12) protein is Isoaspartyl dipeptidase (iadA).